A 419-amino-acid polypeptide reads, in one-letter code: Probable pectate lyase C (419 aa).

A signal peptide spans 1–19; it reads MRLTPSLISCLSLLHFTSA. Residues Asn-48, Asn-164, and Asn-201 are each glycosylated (N-linked (GlcNAc...) asparagine). Arg-204 is a catalytic residue. An EF-hand domain is found at 261-296; it reads NENFHAYVETNYYDSDKDGTLNGSELGVDSTNYGGM. Ca(2+)-binding residues include Asp-274, Asp-276, Asp-278, and Thr-280. Asn-282 is a glycosylation site (N-linked (GlcNAc...) asparagine). Position 285 (Glu-285) interacts with Ca(2+). Positions 350–395 are disordered; the sequence is ALISDEADMGGAGDLDQGTTPTDTDGDGIPDDAEAELGTDPNTADS. Residues 363–372 show a composition bias toward low complexity; it reads DLDQGTTPTD. Positions 373 to 386 are enriched in acidic residues; it reads TDGDGIPDDAEAEL.

Belongs to the polysaccharide lyase 1 family. Ca(2+) serves as cofactor.

It localises to the secreted. The enzyme catalyses Eliminative cleavage of (1-&gt;4)-alpha-D-galacturonan to give oligosaccharides with 4-deoxy-alpha-D-galact-4-enuronosyl groups at their non-reducing ends.. In terms of biological role, pectinolytic enzyme consist of four classes of enzymes: pectin lyase, polygalacturonase, pectin methylesterase and rhamnogalacturonase. Among pectinolytic enzymes, pectin lyase is the most important in depolymerization of pectin, since it cleaves internal glycosidic bonds of highly methylated pectins. Favors pectate, the anion, over pectin, the methyl ester. The protein is Probable pectate lyase C (plyC) of Aspergillus flavus (strain ATCC 200026 / FGSC A1120 / IAM 13836 / NRRL 3357 / JCM 12722 / SRRC 167).